A 295-amino-acid chain; its full sequence is Pyridoxal 5'-phosphate synthase subunit PdxS (295 aa).

Aspartate 25 is a D-ribose 5-phosphate binding site. The active-site Schiff-base intermediate with D-ribose 5-phosphate is lysine 82. Glycine 154 is a binding site for D-ribose 5-phosphate. A D-glyceraldehyde 3-phosphate-binding site is contributed by arginine 166. Residues glycine 215 and 236 to 237 each bind D-ribose 5-phosphate; that span reads GS.

Belongs to the PdxS/SNZ family. In terms of assembly, in the presence of PdxT, forms a dodecamer of heterodimers.

The catalysed reaction is aldehydo-D-ribose 5-phosphate + D-glyceraldehyde 3-phosphate + L-glutamine = pyridoxal 5'-phosphate + L-glutamate + phosphate + 3 H2O + H(+). The protein operates within cofactor biosynthesis; pyridoxal 5'-phosphate biosynthesis. Catalyzes the formation of pyridoxal 5'-phosphate from ribose 5-phosphate (RBP), glyceraldehyde 3-phosphate (G3P) and ammonia. The ammonia is provided by the PdxT subunit. Can also use ribulose 5-phosphate and dihydroxyacetone phosphate as substrates, resulting from enzyme-catalyzed isomerization of RBP and G3P, respectively. This Macrococcus caseolyticus (strain JCSC5402) (Macrococcoides caseolyticum) protein is Pyridoxal 5'-phosphate synthase subunit PdxS.